Reading from the N-terminus, the 1420-residue chain is Mediator of RNA polymerase II transcription subunit 13 (1420 aa).

Residues Ser-370, Ser-375, and Ser-425 each carry the phosphoserine modification. A compositionally biased stretch (polar residues) spans 416–427 (TTVSNDLENSPL). The tract at residues 416–511 (TTVSNDLENS…TNESNKSISD (96 aa)) is disordered. The span at 429–439 (TELEANGRSLE) shows a compositional bias: basic and acidic residues. Polar residues predominate over residues 440-453 (KVNNSVSKTGSVDT). Basic and acidic residues predominate over residues 454 to 484 (LHNKEGTLEQREQNENLPSDKSDSMVDKELF). The segment covering 494-508 (GDSNKSNSTNESNKS) has biased composition (low complexity). The residue at position 601 (Thr-601) is a Phosphothreonine. Residue Ser-608 is modified to Phosphoserine; by PKA. Position 636 is a phosphoserine (Ser-636). The interval 653–691 (LSSSEEEEDEEENGSSDEDLKSLNVRDDMKPSDNISTNT) is disordered. A compositionally biased stretch (acidic residues) spans 655-669 (SSEEEEDEEENGSSD). Positions 670 to 683 (EDLKSLNVRDDMKP) are enriched in basic and acidic residues. Phosphoserine is present on Ser-748.

Belongs to the Mediator complex subunit 13 family. In terms of assembly, component of the SRB8-11 complex which consists of SRB8, SSN2/SRB9, SSN3/SRB10 and SSN8/SRB11. The SRB8-11 complex associates with the Mediator complex. The SSN3/SRB10 and SSN8/SRB11 kinase-cyclin pair also associate with the RNA polymerase II holoenzyme. In terms of processing, phosphorylated. PKA-dependent phosphorylation at 'Ser-608' is enhanced by activation of the RAS signaling pathway.

It localises to the nucleus. Functionally, component of the SRB8-11 complex. The SRB8-11 complex is a regulatory module of the Mediator complex which is itself involved in regulation of basal and activated RNA polymerase II-dependent transcription. The SRB8-11 complex may be involved in the transcriptional repression of a subset of genes regulated by Mediator. It may inhibit the association of the Mediator complex with RNA polymerase II to form the holoenzyme complex. The SRB8-11 complex phosphorylates the C-terminal domain (CTD) of the largest subunit of RNA polymerase II RPB1 at serines 2 and 5. The polypeptide is Mediator of RNA polymerase II transcription subunit 13 (SSN2) (Saccharomyces cerevisiae (strain ATCC 204508 / S288c) (Baker's yeast)).